A 327-amino-acid chain; its full sequence is RING-H2 finger protein ATL34 (327 aa).

The N-terminal stretch at 1-26 (MTIGKSPILLHHHVIFLLLLVLQVSG) is a signal peptide. A helical transmembrane segment spans residues 47 to 67 (AVIIAMLMFTLLFSMLACCVC). The RING-type; atypical zinc finger occupies 128–170 (CAICLNEFEDEETLRLMPPCSHAFHASCIDVWLSSRSTCPVCR). A disordered region spans residues 280 to 327 (LSHMKTLPQARSSREGYRSGSVGSERRGKGKEKEFGEGSFDRLKAEMV). Residues 303-327 (SERRGKGKEKEFGEGSFDRLKAEMV) show a composition bias toward basic and acidic residues.

This sequence belongs to the RING-type zinc finger family. ATL subfamily.

The protein resides in the membrane. The catalysed reaction is S-ubiquitinyl-[E2 ubiquitin-conjugating enzyme]-L-cysteine + [acceptor protein]-L-lysine = [E2 ubiquitin-conjugating enzyme]-L-cysteine + N(6)-ubiquitinyl-[acceptor protein]-L-lysine.. The protein operates within protein modification; protein ubiquitination. The sequence is that of RING-H2 finger protein ATL34 (ATL34) from Arabidopsis thaliana (Mouse-ear cress).